The sequence spans 886 residues: Leucine--tRNA ligase (886 aa).

Positions 51-61 (PYPSGRIHMGH) match the 'HIGH' region motif. A 'KMSKS' region motif is present at residues 644–648 (KMSKS). Lysine 647 is a binding site for ATP.

It belongs to the class-I aminoacyl-tRNA synthetase family.

The protein localises to the cytoplasm. The enzyme catalyses tRNA(Leu) + L-leucine + ATP = L-leucyl-tRNA(Leu) + AMP + diphosphate. The protein is Leucine--tRNA ligase of Bartonella tribocorum (strain CIP 105476 / IBS 506).